A 737-amino-acid polypeptide reads, in one-letter code: MQARKKYVLLGLCTCCWILLYYWAGLQERLLGLITHRRGEVPRPWPDWLDRALLPNFAEQLDLQNGGGPGDSPRQRKQAWSSIYKDSRCRMDTCFDFGRCQTQSGFRVYIYPPEKGERVSEGYRKILTSVSESRYYTSDPREACLFVLGIDTLDRDQLSQQFVPNVDERIRGYPLWNDGRNHVIFNLYSGTWPNYTEDLGFNVGQAILAKASLNTEHFRPGFDISIPLFSKEHPQKGGKRGWLVRNSVPPRRKYLLMFKGKRYLTGIGSDTRNALHHIHNGKDIVSLTTCRHGKDWEKHKDARCDHDNQEYERFDYQELLHNSTFCLVPRGRRLGSFRFLESLQAACIPVLLSNGWELPFSDVIQWNQAVVEGDERLLLQVPSTVRAVGIDRVLALRQQTQTLWDAYFSSVDKIVLTTLEIIKDRVYSHISRNKLMWNALPGGLLVLPEFSTHLAHYPFYYLHLGISPGLEFTAVIHATSPLVSQSQPIMKLLQVVSKSKYCSQIIILWNSEKSPPQRSKWPPMPVPLTVTDGRRKTSSRFLPHAAIETEAVLSLDEDTVLLTSEINFAFHVWRSFPDRIVGYPPRSHFWDPVKKAWGYTSKWTNEYSIILTGAAFYHRYYHHLFSHYLPSSLRALVDHSCNCEDILMNFLVSSVAHLPPVKVAQRKQYKEMPSLQGTKMAPWANPEHFTQRQECVNTFSSWFGYMPLEHSQFRLDPVLFKDHVSVLRKRYKDLERV.

At 1-6 (MQARKK) the chain is on the cytoplasmic side. Residues 7-27 (YVLLGLCTCCWILLYYWAGLQ) form a helical; Signal-anchor for type II membrane protein membrane-spanning segment. The Lumenal segment spans residues 28–737 (ERLLGLITHR…RKRYKDLERV (710 aa)). 2 N-linked (GlcNAc...) asparagine glycosylation sites follow: Asn-194 and Asn-322. Residues Arg-432, Arg-540, Asp-556, Glu-557, Asp-558, Glu-644, Asp-645, and Arg-692 each contribute to the UDP-N-acetyl-alpha-D-glucosamine site. Asp-558 lines the Mn(2+) pocket. A disulfide bridge connects residues Cys-643 and Cys-695. Asp-645 is an active-site residue.

This sequence belongs to the glycosyltransferase 47 family. Mn(2+) is required as a cofactor.

Its subcellular location is the endoplasmic reticulum membrane. The catalysed reaction is 3-O-{[(1-&gt;4)-beta-D-GlcA-(1-&gt;4)-alpha-D-GlcNAc](n)-(1-&gt;4)-beta-D-GlcA-(1-&gt;3)-beta-D-Gal-(1-&gt;3)-beta-D-Gal-(1-&gt;4)-beta-D-Xyl}-L-seryl-[protein] + UDP-N-acetyl-alpha-D-glucosamine = 3-O-{alpha-D-GlcNAc-[(1-&gt;4)-beta-D-GlcA-(1-&gt;4)-alpha-D-GlcNAc](n)-(1-&gt;4)-beta-D-GlcA-(1-&gt;3)-beta-D-Gal-(1-&gt;3)-beta-D-Gal-(1-&gt;4)-beta-D-Xyl}-L-seryl-[protein] + UDP + H(+). The enzyme catalyses 3-O-{alpha-D-GlcNAc-[(1-&gt;4)-beta-D-GlcA-(1-&gt;4)-alpha-D-GlcNAc](n)-(1-&gt;4)-beta-D-GlcA-(1-&gt;3)-beta-D-Gal-(1-&gt;3)-beta-D-Gal-(1-&gt;4)-beta-D-Xyl}-L-seryl-[protein] + UDP-alpha-D-glucuronate = 3-O-{[(1-&gt;4)-beta-D-GlcA-(1-&gt;4)-alpha-D-GlcNAc](n+1)-(1-&gt;4)-beta-D-GlcA-(1-&gt;3)-beta-D-Gal-(1-&gt;3)-beta-D-Gal-(1-&gt;4)-beta-D-Xyl}-L-seryl-[protein] + UDP + H(+). Its pathway is protein modification; protein glycosylation. In terms of biological role, glycosyltransferase required for the biosynthesis of heparan-sulfate. This Danio rerio (Zebrafish) protein is Exostosin-1c (ext1c).